A 312-amino-acid polypeptide reads, in one-letter code: Porphobilinogen deaminase (312 aa).

S-(dipyrrolylmethanemethyl)cysteine is present on Cys-243.

The protein belongs to the HMBS family. Monomer. It depends on dipyrromethane as a cofactor.

The enzyme catalyses 4 porphobilinogen + H2O = hydroxymethylbilane + 4 NH4(+). It functions in the pathway porphyrin-containing compound metabolism; protoporphyrin-IX biosynthesis; coproporphyrinogen-III from 5-aminolevulinate: step 2/4. Tetrapolymerization of the monopyrrole PBG into the hydroxymethylbilane pre-uroporphyrinogen in several discrete steps. In Vibrio campbellii (strain ATCC BAA-1116), this protein is Porphobilinogen deaminase.